Here is a 44-residue protein sequence, read N- to C-terminus: Viresin (44 aa).

This sequence belongs to the insect A10/OS-D protein family.

It is found in the secreted. Has antibacterial activity against the Gram-negative bacteria E.coli and E.cloacae, but not against the Gram-negative bacteria P.aeruginosa, P.vulgaris, K.pneumoniae and S.enteritidis or the Gram-positive bacteria S.aureus, S.epidermidis and S.salivarius. The sequence is that of Viresin from Heliothis virescens (Tobacco budworm moth).